We begin with the raw amino-acid sequence, 166 residues long: Large ribosomal subunit protein uL10 (166 aa).

The protein belongs to the universal ribosomal protein uL10 family. Part of the ribosomal stalk of the 50S ribosomal subunit. The N-terminus interacts with L11 and the large rRNA to form the base of the stalk. The C-terminus forms an elongated spine to which L12 dimers bind in a sequential fashion forming a multimeric L10(L12)X complex.

Its function is as follows. Forms part of the ribosomal stalk, playing a central role in the interaction of the ribosome with GTP-bound translation factors. The chain is Large ribosomal subunit protein uL10 from Pseudomonas fluorescens (strain SBW25).